We begin with the raw amino-acid sequence, 654 residues long: Probable Xaa-Pro aminopeptidase P (654 aa).

Mn(2+) is bound by residues Asp-449, Asp-460, Glu-558, and Glu-572.

The protein belongs to the peptidase M24B family. It depends on Mn(2+) as a cofactor.

The enzyme catalyses Release of any N-terminal amino acid, including proline, that is linked to proline, even from a dipeptide or tripeptide.. Its function is as follows. Catalyzes the removal of a penultimate prolyl residue from the N-termini of peptides. The chain is Probable Xaa-Pro aminopeptidase P (ampp) from Aspergillus flavus (strain ATCC 200026 / FGSC A1120 / IAM 13836 / NRRL 3357 / JCM 12722 / SRRC 167).